Here is a 319-residue protein sequence, read N- to C-terminus: Lipoyl synthase (319 aa).

[4Fe-4S] cluster-binding residues include Cys61, Cys66, Cys72, Cys87, Cys91, Cys94, and Ser300. One can recognise a Radical SAM core domain in the interval 73-289 (WDKKHATFMI…ESVAYSKGFL (217 aa)).

The protein belongs to the radical SAM superfamily. Lipoyl synthase family. [4Fe-4S] cluster is required as a cofactor.

It localises to the cytoplasm. It catalyses the reaction [[Fe-S] cluster scaffold protein carrying a second [4Fe-4S](2+) cluster] + N(6)-octanoyl-L-lysyl-[protein] + 2 oxidized [2Fe-2S]-[ferredoxin] + 2 S-adenosyl-L-methionine + 4 H(+) = [[Fe-S] cluster scaffold protein] + N(6)-[(R)-dihydrolipoyl]-L-lysyl-[protein] + 4 Fe(3+) + 2 hydrogen sulfide + 2 5'-deoxyadenosine + 2 L-methionine + 2 reduced [2Fe-2S]-[ferredoxin]. It participates in protein modification; protein lipoylation via endogenous pathway; protein N(6)-(lipoyl)lysine from octanoyl-[acyl-carrier-protein]: step 2/2. Functionally, catalyzes the radical-mediated insertion of two sulfur atoms into the C-6 and C-8 positions of the octanoyl moiety bound to the lipoyl domains of lipoate-dependent enzymes, thereby converting the octanoylated domains into lipoylated derivatives. The chain is Lipoyl synthase from Rhodopseudomonas palustris (strain BisB18).